Consider the following 406-residue polypeptide: CMP-sialic acid transporter 2 (406 aa).

Residues 1-41 (MKNGMAECSVCRSRLVSPSSKAISRAYDNYNYKIRVSSKQR) lie on the Cytoplasmic side of the membrane. Residues 42–62 (ALNVFLVVGDCMLVGLQPVLV) form a helical membrane-spanning segment. Residues 63–75 (YMSKVDGKFNFSP) are Lumenal-facing. Residues 76–96 (ISVNFLTEIAKVIFAMVMLLF) form a helical membrane-spanning segment. At 97 to 148 (QARHQKVGEKPLLSLSTFVQAARNNMLLAVPAGLYAINNYLKFTMQLYFNPA) the chain is on the cytoplasmic side. The helical transmembrane segment at 149–169 (TVKMLSNLKVLVIAVLLKMIM) threads the bilayer. Residues 170–172 (KRR) lie on the Lumenal side of the membrane. A helical transmembrane segment spans residues 173 to 193 (FSIIQWEALALLLIGISINQL). The Cytoplasmic segment spans residues 194–201 (RSLPEGAT). A helical membrane pass occupies residues 202–222 (TVAVPIATGAYICTFIFVTVP). Residues 223 to 245 (SLASVYNEYALKSQYDTSIYLQN) lie on the Lumenal side of the membrane. The chain crosses the membrane as a helical span at residues 246 to 266 (LFLYGYGAIFNFLGILGTVIY). Over 267 to 282 (KGPGSFDILQGHSRAT) the chain is Cytoplasmic. The helical transmembrane segment at 283–303 (MFLILNNAAQGILSSFFFKYA) threads the bilayer. Topologically, residues 304–323 (DTILKKYSSTVATIFTGIAS) are lumenal. Residues 324-344 (AALFGHILTMNFLLGISIVFI) form a helical membrane-spanning segment. Over 345–406 (SMHQFFSPLS…SDDRVPLLPR (62 aa)) the chain is Cytoplasmic.

The protein belongs to the nucleotide-sugar transporter family. CMP-Sialate:CMP antiporter (TC 2.A.7.12) subfamily.

The protein localises to the golgi apparatus membrane. Sugar transporter involved in the transport of CMP-sialic acid from the cytoplasm into the Golgi. The chain is CMP-sialic acid transporter 2 from Arabidopsis thaliana (Mouse-ear cress).